Here is a 215-residue protein sequence, read N- to C-terminus: 3-demethoxyubiquinol 3-hydroxylase (215 aa).

Residues Glu64, Glu94, His97, Glu146, Glu178, and His181 each coordinate Fe cation.

It belongs to the COQ7 family. The cofactor is Fe cation.

The protein localises to the cell membrane. It carries out the reaction a 5-methoxy-2-methyl-3-(all-trans-polyprenyl)benzene-1,4-diol + AH2 + O2 = a 3-demethylubiquinol + A + H2O. It functions in the pathway cofactor biosynthesis; ubiquinone biosynthesis. In terms of biological role, catalyzes the hydroxylation of 2-nonaprenyl-3-methyl-6-methoxy-1,4-benzoquinol during ubiquinone biosynthesis. This Bordetella avium (strain 197N) protein is 3-demethoxyubiquinol 3-hydroxylase.